The following is a 289-amino-acid chain: Fatty acid elongase 1 (289 aa).

A run of 7 helical transmembrane segments spans residues 22–42, 72–92, 123–143, 152–172, 177–197, 208–228, and 251–271; these read VVGY…KLFA, AMVL…STVT, FWIG…IFLV, FLHW…YCVG, IWVA…FAIA, WAPY…FVTL, and LLMY…AHVL. The HxxHH motif motif lies at 154–158; it reads HWYHH. The Nucleophile role is filled by His157. The N-linked (GlcNAc...) asparagine glycan is linked to Asn282.

It belongs to the ELO family.

The protein localises to the endoplasmic reticulum membrane. It catalyses the reaction an acyl-CoA + malonyl-CoA + H(+) = a 3-oxoacyl-CoA + CO2 + CoA. Its pathway is lipid metabolism; fatty acid biosynthesis. In terms of biological role, involved in the synthesis of fatty acids. Elongates C4 fatty acids. Required for the normal mitochondrial function, energy metabolism and growth of epimastigotes. The polypeptide is Fatty acid elongase 1 (Trypanosoma cruzi (strain CL Brener)).